Reading from the N-terminus, the 666-residue chain is DNA ligase (666 aa).

Residues 34-38 (DAEYD), 83-84 (SL), and Glu114 each bind NAD(+). Lys116 functions as the N6-AMP-lysine intermediate in the catalytic mechanism. The NAD(+) site is built by Arg137, Glu171, Lys286, and Lys310. The Zn(2+) site is built by Cys404, Cys407, Cys422, and Cys427. Residues 588-666 (NTESTISEKS…EEFFAILKGE (79 aa)) enclose the BRCT domain.

It belongs to the NAD-dependent DNA ligase family. LigA subfamily. Requires Mg(2+) as cofactor. Mn(2+) serves as cofactor.

The catalysed reaction is NAD(+) + (deoxyribonucleotide)n-3'-hydroxyl + 5'-phospho-(deoxyribonucleotide)m = (deoxyribonucleotide)n+m + AMP + beta-nicotinamide D-nucleotide.. In terms of biological role, DNA ligase that catalyzes the formation of phosphodiester linkages between 5'-phosphoryl and 3'-hydroxyl groups in double-stranded DNA using NAD as a coenzyme and as the energy source for the reaction. It is essential for DNA replication and repair of damaged DNA. The sequence is that of DNA ligase from Mesoplasma florum (strain ATCC 33453 / NBRC 100688 / NCTC 11704 / L1) (Acholeplasma florum).